Reading from the N-terminus, the 77-residue chain is Acyl carrier protein (77 aa).

In terms of domain architecture, Carrier spans 1–76 (MSLEDDVKSI…DVITYIKTRQ (76 aa)). S36 bears the O-(pantetheine 4'-phosphoryl)serine mark.

The protein belongs to the acyl carrier protein (ACP) family. Post-translationally, 4'-phosphopantetheine is transferred from CoA to a specific serine of apo-ACP by AcpS. This modification is essential for activity because fatty acids are bound in thioester linkage to the sulfhydryl of the prosthetic group.

It is found in the cytoplasm. Its pathway is lipid metabolism; fatty acid biosynthesis. Its function is as follows. Carrier of the growing fatty acid chain in fatty acid biosynthesis. In Chlamydia caviae (strain ATCC VR-813 / DSM 19441 / 03DC25 / GPIC) (Chlamydophila caviae), this protein is Acyl carrier protein.